Consider the following 126-residue polypeptide: Large ribosomal subunit protein uL22 (126 aa).

This sequence belongs to the universal ribosomal protein uL22 family. Part of the 50S ribosomal subunit.

This protein binds specifically to 23S rRNA; its binding is stimulated by other ribosomal proteins, e.g. L4, L17, and L20. It is important during the early stages of 50S assembly. It makes multiple contacts with different domains of the 23S rRNA in the assembled 50S subunit and ribosome. In terms of biological role, the globular domain of the protein is located near the polypeptide exit tunnel on the outside of the subunit, while an extended beta-hairpin is found that lines the wall of the exit tunnel in the center of the 70S ribosome. The chain is Large ribosomal subunit protein uL22 from Jannaschia sp. (strain CCS1).